Here is a 556-residue protein sequence, read N- to C-terminus: 2-succinyl-5-enolpyruvyl-6-hydroxy-3-cyclohexene-1-carboxylate synthase (556 aa).

This sequence belongs to the TPP enzyme family. MenD subfamily. As to quaternary structure, homodimer. Mg(2+) serves as cofactor. It depends on Mn(2+) as a cofactor. Thiamine diphosphate is required as a cofactor.

It carries out the reaction isochorismate + 2-oxoglutarate + H(+) = 5-enolpyruvoyl-6-hydroxy-2-succinyl-cyclohex-3-ene-1-carboxylate + CO2. It participates in quinol/quinone metabolism; 1,4-dihydroxy-2-naphthoate biosynthesis; 1,4-dihydroxy-2-naphthoate from chorismate: step 2/7. The protein operates within quinol/quinone metabolism; menaquinone biosynthesis. Its function is as follows. Catalyzes the thiamine diphosphate-dependent decarboxylation of 2-oxoglutarate and the subsequent addition of the resulting succinic semialdehyde-thiamine pyrophosphate anion to isochorismate to yield 2-succinyl-5-enolpyruvyl-6-hydroxy-3-cyclohexene-1-carboxylate (SEPHCHC). The chain is 2-succinyl-5-enolpyruvyl-6-hydroxy-3-cyclohexene-1-carboxylate synthase from Escherichia coli (strain 55989 / EAEC).